A 122-amino-acid chain; its full sequence is Large ribosomal subunit protein uL14 (122 aa).

It belongs to the universal ribosomal protein uL14 family. As to quaternary structure, part of the 50S ribosomal subunit. Forms a cluster with proteins L3 and L19. In the 70S ribosome, L14 and L19 interact and together make contacts with the 16S rRNA in bridges B5 and B8.

Its function is as follows. Binds to 23S rRNA. Forms part of two intersubunit bridges in the 70S ribosome. This Ruegeria pomeroyi (strain ATCC 700808 / DSM 15171 / DSS-3) (Silicibacter pomeroyi) protein is Large ribosomal subunit protein uL14.